The sequence spans 258 residues: Ribosomal RNA small subunit methyltransferase J (258 aa).

S-adenosyl-L-methionine-binding positions include 106 to 107 (RD), 122 to 123 (ER), and Asp-181.

The protein belongs to the methyltransferase superfamily. RsmJ family.

It localises to the cytoplasm. It carries out the reaction guanosine(1516) in 16S rRNA + S-adenosyl-L-methionine = N(2)-methylguanosine(1516) in 16S rRNA + S-adenosyl-L-homocysteine + H(+). Specifically methylates the guanosine in position 1516 of 16S rRNA. The protein is Ribosomal RNA small subunit methyltransferase J of Pseudoalteromonas atlantica (strain T6c / ATCC BAA-1087).